The primary structure comprises 459 residues: Argininosuccinate lyase (459 aa).

The segment at 440–459 is disordered; the sequence is DEKKLEELRQNENRDNVYNP.

This sequence belongs to the lyase 1 family. Argininosuccinate lyase subfamily.

It is found in the cytoplasm. It carries out the reaction 2-(N(omega)-L-arginino)succinate = fumarate + L-arginine. It participates in amino-acid biosynthesis; L-arginine biosynthesis; L-arginine from L-ornithine and carbamoyl phosphate: step 3/3. This chain is Argininosuccinate lyase, found in Pyrococcus furiosus (strain ATCC 43587 / DSM 3638 / JCM 8422 / Vc1).